An 88-amino-acid polypeptide reads, in one-letter code: Protein transport protein SBH2 (88 aa).

The tract at residues 1–42 (MAASVPPGGQRILQKRRQAQSIKEKQAKQTPTSTRQAGYGGS) is disordered. At 1-61 (MAASVPPGGQ…DEANGFRVDS (61 aa)) the chain is on the cytoplasmic side. Residues 28–42 (KQTPTSTRQAGYGGS) show a composition bias toward polar residues. The helical transmembrane segment at 62–82 (LVVLFLSVGFIFSVIALHLLT) threads the bilayer.

This sequence belongs to the SEC61-beta family. Component of the heterotrimeric Ssh1 complex, which is composed of SSH1, SBH2 and SSS1.

The protein resides in the endoplasmic reticulum membrane. Its function is as follows. Part of the Ssh1 complex, which probably is the major component of a channel-forming translocon complex that may function exclusively in the cotranslational pathway of protein endoplasmic reticulum (ER) import. This Saccharomyces cerevisiae (strain ATCC 204508 / S288c) (Baker's yeast) protein is Protein transport protein SBH2 (SBH2).